Reading from the N-terminus, the 502-residue chain is ATP synthase subunit alpha (502 aa).

Position 169 to 176 (169 to 176) interacts with ATP; that stretch reads GDRQTGKT.

This sequence belongs to the ATPase alpha/beta chains family. In terms of assembly, F-type ATPases have 2 components, CF(1) - the catalytic core - and CF(0) - the membrane proton channel. CF(1) has five subunits: alpha(3), beta(3), gamma(1), delta(1), epsilon(1). CF(0) has three main subunits: a(1), b(2) and c(9-12). The alpha and beta chains form an alternating ring which encloses part of the gamma chain. CF(1) is attached to CF(0) by a central stalk formed by the gamma and epsilon chains, while a peripheral stalk is formed by the delta and b chains.

It localises to the cell membrane. It catalyses the reaction ATP + H2O + 4 H(+)(in) = ADP + phosphate + 5 H(+)(out). Its function is as follows. Produces ATP from ADP in the presence of a proton gradient across the membrane. The alpha chain is a regulatory subunit. The protein is ATP synthase subunit alpha of Desulfitobacterium hafniense (strain Y51).